Here is a 543-residue protein sequence, read N- to C-terminus: EH domain-containing protein 2 (543 aa).

Serine 3 carries the phosphoserine modification. One can recognise a Dynamin-type G domain in the interval 55–286 (FDGKPMVLVA…DLFRDIQGLP (232 aa)). The tract at residues 65-72 (GQYSTGKT) is G1 motif. An ATP-binding site is contributed by 65 to 72 (GQYSTGKT). Residues 91-92 (EP) are G2 motif. The KPF loop; caveolar targeting motif lies at 120-122 (KPF). The tract at residues 153–156 (DTPG) is G3 motif. The interval 219 to 222 (NKAD) is G4 motif. Lysine 220 lines the ATP pocket. A region of interest (G5 motif) is located at residue valine 243. Tryptophan 258 serves as a coordination point for ATP. The segment at 320–340 (SVFGKENKKKQLILKLPVIFA) is mediates membrane-binding. 5 positions are modified to phosphoserine: serine 438, serine 468, serine 470, serine 484, and serine 493. The region spanning 449 to 537 (DKSKYDEIFY…RRLVPPSKRR (89 aa)) is the EH domain. An EF-hand domain is found at 481–516 (LPNSVLGRIWKLSDVDRDGMLDDEEFALASHLIEAK). Residues aspartate 494, aspartate 496, aspartate 498, methionine 500, and glutamate 505 each coordinate Ca(2+). The disordered stretch occupies residues 523-543 (PANLPRRLVPPSKRRHKGSAE). Residues 534–543 (SKRRHKGSAE) are compositionally biased toward basic residues.

Belongs to the TRAFAC class dynamin-like GTPase superfamily. Dynamin/Fzo/YdjA family. EHD subfamily. Homodimer and homooligomer. Interacts with EHD1. May also interact with EHD3 and EHD4. Interacts with MYOF. Interacts with EHBP1. Interacts with FER1L5 (via second C2 domain). Interacts with CAV1 in a cholesterol-dependent manner. Interacts (via EH domain) with PACSIN2 (via NPF motifs); this interaction probably stabilizes the caveolae. In terms of tissue distribution, highly expressed in heart and moderately expressed in placenta, lung, and skeletal muscle.

The protein localises to the cell membrane. The protein resides in the membrane. It localises to the caveola. It is found in the endosome membrane. Its subcellular location is the cytoplasm. The protein localises to the cytosol. The very low intrinsic ATPase activity is increased upon interaction with liposomes. In terms of biological role, ATP- and membrane-binding protein that controls membrane reorganization/tubulation upon ATP hydrolysis. Plays a role in membrane trafficking between the plasma membrane and endosomes. Important for the internalization of GLUT4. Required for fusion of myoblasts to skeletal muscle myotubes. Required for normal translocation of FER1L5 to the plasma membrane. Regulates the equilibrium between cell surface-associated and cell surface-dissociated caveolae by constraining caveolae at the cell membrane. The polypeptide is EH domain-containing protein 2 (Homo sapiens (Human)).